The following is a 244-amino-acid chain: 3-deoxy-manno-octulosonate cytidylyltransferase (244 aa).

Belongs to the KdsB family.

It localises to the cytoplasm. The catalysed reaction is 3-deoxy-alpha-D-manno-oct-2-ulosonate + CTP = CMP-3-deoxy-beta-D-manno-octulosonate + diphosphate. The protein operates within nucleotide-sugar biosynthesis; CMP-3-deoxy-D-manno-octulosonate biosynthesis; CMP-3-deoxy-D-manno-octulosonate from 3-deoxy-D-manno-octulosonate and CTP: step 1/1. It participates in bacterial outer membrane biogenesis; lipopolysaccharide biosynthesis. Activates KDO (a required 8-carbon sugar) for incorporation into bacterial lipopolysaccharide in Gram-negative bacteria. The chain is 3-deoxy-manno-octulosonate cytidylyltransferase from Rickettsia canadensis (strain McKiel).